The following is a 137-amino-acid chain: Large ribosomal subunit protein uL16 (137 aa).

It belongs to the universal ribosomal protein uL16 family. As to quaternary structure, part of the 50S ribosomal subunit.

Functionally, binds 23S rRNA and is also seen to make contacts with the A and possibly P site tRNAs. The sequence is that of Large ribosomal subunit protein uL16 from Streptococcus agalactiae serotype Ia (strain ATCC 27591 / A909 / CDC SS700).